A 293-amino-acid polypeptide reads, in one-letter code: MATATTTLHSTTGTVYVADGTTDGKVGYYNHTDDSTNVIRKPIPIEVEDARTLSKSPTTKAEGYQLVNFHTKIPEEHFLNSKLPENKELIEEVYFDECRRLVQEVTGAAEAYPYVYRVRNQEQNAKESNKSNFHTDFVPIVHVDRDDVTAPQRLRASLGAEKADMLLSKYKSYGSINVWRPVKNMVQKWPLMLVDHKSIEDWDYSTHMFTLHSSNDERVATRGAKEHETILTHDKRYRYIYASDMTPEEAWLFFAFHSDPALGIPHGAFWDDSTKEEALTRCSIEVRIWVFFD.

This sequence belongs to the asaB hydroxylase/desaturase family.

It participates in secondary metabolite biosynthesis. Functionally, oxidoreductase; part of the gene cluster that mediates the biosynthesis of squalestatin S1 (SQS1, also known as zaragozic acid A), a heavily oxidized fungal polyketide that offers potent cholesterol lowering activity by targeting squalene synthase (SS). SQS1 is composed of a 2,8-dioxobicyclic[3.2.1]octane-3,4,5-tricarboxyclic acid core that is connected to two lipophilic polyketide arms. These initial steps feature the priming of an unusual benzoic acid starter unit onto the highly reducing polyketide synthase pks2, followed by oxaloacetate extension and product release to generate a tricarboxylic acid containing product. The phenylalanine ammonia lyase (PAL) M7 and the acyl-CoA ligase M9 are involved in transforming phenylalanine into benzoyl-CoA. The citrate synthase-like protein R3 is involved in connecting the C-alpha-carbons of the hexaketide chain and oxaloacetate to afford the tricarboxylic acid unit. The potential hydrolytic enzymes, M8 and M10, are in close proximity to pks2 and may participate in product release. On the other side, the tetraketide arm is synthesized by a the squalestatin tetraketide synthase pks1 and enzymatically esterified to the core in the last biosynthetic step, by the acetyltransferase M4. The biosynthesis of the tetraketide must involve 3 rounds of chain extension. After the first and second rounds methyl-transfer occurs, and in all rounds of extension the ketoreductase and dehydratase are active. The enoyl reductase and C-MeT of pks1 are not active in the final round of extension. The acetyltransferase M4 appears to have a broad substrate selectivity for its acyl CoA substrate, allowing the in vitro synthesis of novel squalestatins. The biosynthesis of SQS1 requires several oxidative steps likely performed by oxidoreductases M1, R1 and R2. Finally, in support of the identification of the cluster as being responsible for SQS1 production, the cluster contains a gene encoding a putative squalene synthase (SS) R6, suggesting a likely mechanism for self-resistance. This Phoma sp. (strain ATCC 20986 / MF5453) protein is Oxidoreductase R2.